Here is a 535-residue protein sequence, read N- to C-terminus: Thermosome subunit gamma (535 aa).

It belongs to the TCP-1 chaperonin family. In terms of assembly, forms a Heterooligomeric complex of two stacked eight-membered rings.

Functionally, molecular chaperone; binds unfolded polypeptides in vitro, and has a weak ATPase activity. The protein is Thermosome subunit gamma (thsC) of Saccharolobus solfataricus (strain ATCC 35092 / DSM 1617 / JCM 11322 / P2) (Sulfolobus solfataricus).